Here is a 621-residue protein sequence, read N- to C-terminus: F-box/LRR-repeat protein 4 (621 aa).

R28 is modified (asymmetric dimethylarginine). In terms of domain architecture, F-box spans 277–332; the sequence is NGYFDKLPYELIQLILNHLSLPDLCRLAQTCRLLHQHCCDPLQYIHLNLQPYWARL. LRR repeat units lie at residues 376-397, 402-421, 427-448, 452-474, 480-501, 504-524, 532-558, 559-583, and 584-609; these read ELVR…EVIS, NLQD…AFGH, SLKR…SILN, ELQH…ASMI, NLRT…AELA, CVLL…STGC, LPNL…ASNC, TRLQ…LLES, and CKDL…LNAS.

In terms of assembly, part of a SCF (SKP1-CUL1-F-box) protein ligase complex. Interacts with FAF2 and VCP. Interacts with PPTC7; this interaction promotes destruction of BNIP3 and NIX and mitophagy suppression.

Its subcellular location is the cytoplasm. The protein resides in the nucleus. It localises to the mitochondrion outer membrane. Functionally, substrate-recognition component of the mitochondria-localized SCF-FBXL4 ubiquitin E3 ligase complex that plays a role in the restriction of mitophagy by controlling the degradation of BNIP3 and NIX mitophagy receptors. Also rescues mitochondrial injury through reverting hyperactivation of DRP1-mediated mitochondrial fission. The protein is F-box/LRR-repeat protein 4 (Fbxl4) of Mus musculus (Mouse).